Here is a 236-residue protein sequence, read N- to C-terminus: Small ribosomal subunit protein uS2c (236 aa).

This sequence belongs to the universal ribosomal protein uS2 family.

The protein resides in the plastid. It is found in the chloroplast. The sequence is that of Small ribosomal subunit protein uS2c (rps2) from Illicium oligandrum (Star anise).